Here is a 616-residue protein sequence, read N- to C-terminus: Dihydroxy-acid dehydratase (616 aa).

Mg(2+) is bound at residue aspartate 81. Cysteine 122 provides a ligand contact to [2Fe-2S] cluster. Residues aspartate 123 and lysine 124 each contribute to the Mg(2+) site. At lysine 124 the chain carries N6-carboxylysine. A [2Fe-2S] cluster-binding site is contributed by cysteine 195. Glutamate 491 is a binding site for Mg(2+). Serine 517 functions as the Proton acceptor in the catalytic mechanism.

This sequence belongs to the IlvD/Edd family. Homodimer. [2Fe-2S] cluster serves as cofactor. The cofactor is Mg(2+).

It catalyses the reaction (2R)-2,3-dihydroxy-3-methylbutanoate = 3-methyl-2-oxobutanoate + H2O. The catalysed reaction is (2R,3R)-2,3-dihydroxy-3-methylpentanoate = (S)-3-methyl-2-oxopentanoate + H2O. Its pathway is amino-acid biosynthesis; L-isoleucine biosynthesis; L-isoleucine from 2-oxobutanoate: step 3/4. The protein operates within amino-acid biosynthesis; L-valine biosynthesis; L-valine from pyruvate: step 3/4. Its function is as follows. Functions in the biosynthesis of branched-chain amino acids. Catalyzes the dehydration of (2R,3R)-2,3-dihydroxy-3-methylpentanoate (2,3-dihydroxy-3-methylvalerate) into 2-oxo-3-methylpentanoate (2-oxo-3-methylvalerate) and of (2R)-2,3-dihydroxy-3-methylbutanoate (2,3-dihydroxyisovalerate) into 2-oxo-3-methylbutanoate (2-oxoisovalerate), the penultimate precursor to L-isoleucine and L-valine, respectively. This Escherichia coli O127:H6 (strain E2348/69 / EPEC) protein is Dihydroxy-acid dehydratase.